The following is a 487-amino-acid chain: b(0,+)-type amino acid transporter 1 (487 aa).

The tract at residues 1 to 22 is disordered; sequence MGETVPRRRREDEKSIQSDEPK. The Cytoplasmic segment spans residues 1 to 31; it reads MGETVPRRRREDEKSIQSDEPKTTSLQKEVG. Phosphoserine is present on serine 18. The helical transmembrane segment at 32 to 55 threads the bilayer; that stretch reads LISGICIIVGTIIGSGIFISPKSV. L-arginine is bound at residue 43 to 47; the sequence is IIGSG. Residues 56–62 lie on the Extracellular side of the membrane; it reads LSNTQAV. Residues 63–84 traverse the membrane as a helical segment; the sequence is GPCLIIWAACGVLGTLGALCFA. Over 85–110 the chain is Cytoplasmic; sequence ELGTMITKSGGEYPYLMEAFGPIPAY. A helical membrane pass occupies residues 111–137; that stretch reads LFSWSSLLVMKPSSFAIICLSFSEYVA. Residues 138-147 are Extracellular-facing; sequence TPFYSGCEPP. 2 helical membrane-spanning segments follow: residues 148 to 169 and 170 to 193; these read KVVVKCLAAAAIMLITTVNSLS and VRLGSYVQNFFTAAKLVIVAIIII. Over 194-217 the chain is Extracellular; the sequence is SGLVLLAQGNTKNFENSFEGAEVS. A helical membrane pass occupies residues 218-238; the sequence is VGAISLALYNGLWAYDGWNQL. Residue aspartate 233 participates in L-arginine binding. At 239–251 the chain is on the cytoplasmic side; that stretch reads NYITEELRNPFRN. Residues 252–274 traverse the membrane as a helical segment; that stretch reads LPLAIIFGIPLVTVCYILINISY. The Extracellular segment spans residues 275–302; sequence FTVMTPTELLQSQAVAVTFGDRVLYPAS. The chain crosses the membrane as a helical span at residues 303–325; that stretch reads WIVPVFVAFSTIGAANGTCFTAG. The Cytoplasmic segment spans residues 326–351; the sequence is RLVYVAGREGHMLKVLSYISVRRLTP. 2 helical membrane passes run 352-370 and 371-391; these read APAIIFYGIVATIYIIPGD and INSLVNYFSFATWLFYGLTIL. The Cytoplasmic segment spans residues 392-410; the sequence is GLIVMRFTRKELERPIKVP. The chain crosses the membrane as a helical span at residues 411 to 431; the sequence is IFIPILVTFIAAFLVLAPVIT. Topologically, residues 432-434 are extracellular; sequence NPA. The chain crosses the membrane as a helical span at residues 435-450; it reads WEYLYCVLFILSGLVF. Residues 451 to 487 lie on the Cytoplasmic side of the membrane; sequence YFLFVYYKFEWAQKISKPITMHLQMLMEVVPPEPDPK.

It belongs to the amino acid-polyamine-organocation (APC) superfamily. As to quaternary structure, disulfide-linked heterodimer composed of the catalytic light chain subunit SLC7A9 and the heavy chain subunit. The heterodimer is the minimal functional unit. Assembles in heterotetramers (dimers of heterodimers) and higher order oligomers. Interacts with CAV1. In terms of tissue distribution, kidney and small intestine.

The protein resides in the apical cell membrane. It carries out the reaction L-leucine(out) + L-arginine(in) = L-leucine(in) + L-arginine(out). It catalyses the reaction L-histidine(out) + L-arginine(in) = L-histidine(in) + L-arginine(out). The catalysed reaction is L-arginine(in) + L-phenylalanine(out) = L-arginine(out) + L-phenylalanine(in). The enzyme catalyses L-cysteine(out) + L-arginine(in) = L-cysteine(in) + L-arginine(out). It carries out the reaction L-cystine(out) + L-arginine(in) = L-cystine(in) + L-arginine(out). It catalyses the reaction L-lysine(out) + L-arginine(in) = L-lysine(in) + L-arginine(out). Functionally, mediates the electrogenic exchange between cationic amino acids and neutral amino acids, with a stoichiometry of 1:1. Has system b(0,+)-like activity with high affinity for extracellular cationic amino acids and L-cystine and lower affinity for intracellular neutral amino acids. Substrate exchange is driven by high concentration of intracellular neutral amino acids and the intracellular reduction of L-cystine to L-cysteine. Required for reabsorption of L-cystine and dibasic amino acids across the brush border membrane in renal proximal tubules. This Oryctolagus cuniculus (Rabbit) protein is b(0,+)-type amino acid transporter 1.